Reading from the N-terminus, the 471-residue chain is MSLREPVELLDPSAVGPVYFIAIGGAGMSGVARIYHDLGVEVRGSDQVDSANLRDLASLGVQTWVGHDPSHLAGARTVVVSSAIRPDNPELVEAHRLGLRIWHRSAALAALMLGREGVSIAGTHGKTTTTGMVATMLDCAGADPSYVIGSPLAATGMSSHLGGGEAFVVEADESDGSFLQYPSQIVVVTNVEADHLDNWGTPQAYFDGFVSMATRPEVRYVVTNADDPGAAELACRLESTGTVRVVTYGESEQAEVRLVDLDLNGTTASATLVYGPTQGRLELQVPGRYNLSNAAAAYCVGSLLGISHQDLLTGIASFTGTLRRFQLVGRVADVSVFDDYAHHPTELRATLGAARRVVTGQGRVIACFQPHLFSRTRDFAGEFGSALTLADRVIVSDIYPAREDPIPGVTGELVHDAVIAAGGDSRYVPDKQDLPEALAEEVRPGDLVITLGAGDVTLVGPVLVGLLEGKA.

An ATP-binding site is contributed by 122–128; the sequence is GTHGKTT.

This sequence belongs to the MurCDEF family.

The protein resides in the cytoplasm. It catalyses the reaction UDP-N-acetyl-alpha-D-muramate + L-alanine + ATP = UDP-N-acetyl-alpha-D-muramoyl-L-alanine + ADP + phosphate + H(+). The protein operates within cell wall biogenesis; peptidoglycan biosynthesis. In terms of biological role, cell wall formation. The protein is UDP-N-acetylmuramate--L-alanine ligase of Cutibacterium acnes (strain DSM 16379 / KPA171202) (Propionibacterium acnes).